Reading from the N-terminus, the 435-residue chain is Eukaryotic peptide chain release factor subunit 1 (435 aa).

The protein belongs to the eukaryotic release factor 1 family. In terms of assembly, heterodimer of two subunits, one of which binds GTP.

The protein resides in the cytoplasm. Its function is as follows. Directs the termination of nascent peptide synthesis (translation) in response to the termination codons UAA, UAG and UGA. In Podospora anserina (Pleurage anserina), this protein is Eukaryotic peptide chain release factor subunit 1 (SU2).